We begin with the raw amino-acid sequence, 254 residues long: Pyridoxine 5'-phosphate synthase (254 aa).

Asn8 is a binding site for 3-amino-2-oxopropyl phosphate. Residue 10–11 (DH) coordinates 1-deoxy-D-xylulose 5-phosphate. Arg19 serves as a coordination point for 3-amino-2-oxopropyl phosphate. His44 serves as the catalytic Proton acceptor. The 1-deoxy-D-xylulose 5-phosphate site is built by Arg46 and His51. Residue Glu74 is the Proton acceptor of the active site. 1-deoxy-D-xylulose 5-phosphate is bound at residue Thr104. Residue His198 is the Proton donor of the active site. 3-amino-2-oxopropyl phosphate is bound by residues Gly199 and 220 to 221 (GH).

Belongs to the PNP synthase family. Homooctamer; tetramer of dimers.

The protein localises to the cytoplasm. The enzyme catalyses 3-amino-2-oxopropyl phosphate + 1-deoxy-D-xylulose 5-phosphate = pyridoxine 5'-phosphate + phosphate + 2 H2O + H(+). It functions in the pathway cofactor biosynthesis; pyridoxine 5'-phosphate biosynthesis; pyridoxine 5'-phosphate from D-erythrose 4-phosphate: step 5/5. Its function is as follows. Catalyzes the complicated ring closure reaction between the two acyclic compounds 1-deoxy-D-xylulose-5-phosphate (DXP) and 3-amino-2-oxopropyl phosphate (1-amino-acetone-3-phosphate or AAP) to form pyridoxine 5'-phosphate (PNP) and inorganic phosphate. The chain is Pyridoxine 5'-phosphate synthase from Caulobacter vibrioides (strain ATCC 19089 / CIP 103742 / CB 15) (Caulobacter crescentus).